A 34-amino-acid polypeptide reads, in one-letter code: Photosystem II reaction center protein M (34 aa).

The chain crosses the membrane as a helical span at residues 5-25 (ILALIAIALFISVPTAFLIII).

Belongs to the PsbM family. PSII is composed of 1 copy each of membrane proteins PsbA, PsbB, PsbC, PsbD, PsbE, PsbF, PsbH, PsbI, PsbJ, PsbK, PsbL, PsbM, PsbT, PsbX, PsbY, PsbZ, Psb30/Ycf12, at least 3 peripheral proteins of the oxygen-evolving complex and a large number of cofactors. It forms dimeric complexes.

The protein localises to the plastid. The protein resides in the chloroplast thylakoid membrane. One of the components of the core complex of photosystem II (PSII). PSII is a light-driven water:plastoquinone oxidoreductase that uses light energy to abstract electrons from H(2)O, generating O(2) and a proton gradient subsequently used for ATP formation. It consists of a core antenna complex that captures photons, and an electron transfer chain that converts photonic excitation into a charge separation. This subunit is found at the monomer-monomer interface. The protein is Photosystem II reaction center protein M of Gnetum parvifolium (Small-leaved jointfir).